Here is a 1067-residue protein sequence, read N- to C-terminus: Kinesin-like protein KIF11-A (1067 aa).

The region spanning 18–359 is the Kinesin motor domain; the sequence is NIQVVVRCRP…LDYASRAKNI (342 aa). 105–112 is an ATP binding site; sequence GQTGTGKT. Coiled-coil stretches lie at residues 365–480, 692–721, and 882–915; these read VNQK…QEAF, DSSS…HSEG, and QAQE…QVQS. Thr-937 bears the Phosphothreonine; by CDK1 mark. Residue Ser-1046 is modified to Phosphoserine; by NEK6.

Belongs to the TRAFAC class myosin-kinesin ATPase superfamily. Kinesin family. BimC subfamily. In terms of assembly, heterotetramer of two heavy and two light chains. Interacts with aurka. Phosphorylation of Thr-937 during mitosis controls the association of this protein with the spindle apparatus. In terms of processing, a subset of this protein primarily localized at the spindle pole is phosphorylated by NEK6 during mitosis. Post-translationally, phosphorylated on a serine residue by aurka. As to expression, highly expressed in unfertilized eggs, especially in the germinal vesicle and in the radial yolk-poor channels. Also present in testis.

Its subcellular location is the cytoplasm. It is found in the cytoskeleton. The protein resides in the spindle pole. Plus end-directed motor protein required for establishing a bipolar spindle. Associates with both interphase and spindle microtubules. May be involved in nuclear divisions taking place during the development of unfertilized eggs. Required in non-mitotic cells for transport of secretory proteins from the Golgi complex to the cell surface. The chain is Kinesin-like protein KIF11-A (kif11-a) from Xenopus laevis (African clawed frog).